Here is a 315-residue protein sequence, read N- to C-terminus: Homoserine kinase (315 aa).

97–107 (PPARGLGSSAT) lines the ATP pocket.

It belongs to the GHMP kinase family. Homoserine kinase subfamily.

The protein localises to the cytoplasm. The enzyme catalyses L-homoserine + ATP = O-phospho-L-homoserine + ADP + H(+). The protein operates within amino-acid biosynthesis; L-threonine biosynthesis; L-threonine from L-aspartate: step 4/5. Functionally, catalyzes the ATP-dependent phosphorylation of L-homoserine to L-homoserine phosphate. In Prochlorococcus marinus (strain MIT 9515), this protein is Homoserine kinase.